A 162-amino-acid polypeptide reads, in one-letter code: UPF0178 protein RHOS4_24670 (162 aa).

It belongs to the UPF0178 family.

This is UPF0178 protein RHOS4_24670 from Cereibacter sphaeroides (strain ATCC 17023 / DSM 158 / JCM 6121 / CCUG 31486 / LMG 2827 / NBRC 12203 / NCIMB 8253 / ATH 2.4.1.) (Rhodobacter sphaeroides).